Consider the following 393-residue polypeptide: Cytotoxic and regulatory T-cell molecule (393 aa).

The N-terminal stretch at M1–A16 is a signal peptide. The Ig-like V-type domain maps to A17 to T111. Topologically, residues A17–G289 are extracellular. 2 disulfides stabilise this stretch: C36–C96 and C139–C194. Residues N85 and N176 are each glycosylated (N-linked (GlcNAc...) asparagine). In terms of domain architecture, Ig-like C2-type spans P119 to A208. A compositionally biased stretch (acidic residues) spans D218–D228. The segment at D218–H280 is disordered. Low complexity predominate over residues A229–T246. Residues V247–P256 show a composition bias toward polar residues. The span at E257–T267 shows a compositional bias: basic and acidic residues. Over residues P270–H280 the composition is skewed to polar residues. A helical membrane pass occupies residues I290–F310. Over I311 to V393 the chain is Cytoplasmic. Residues E333–S356 are disordered. Low complexity predominate over residues E342–Q352. A PDZ-binding motif is present at residues E390–V393.

This sequence belongs to the nectin family. Monomer. May form homodimer (via Ig-like V-type domain). Interacts (via Ig-like V-type domain) with CADM1 (via Ig-like V-type domain); the interaction competes with CRTAM homodimerization and CADM1 homodimerization. Interacts (via PDZ-binding motif) with SCRIB (via PDZ domain 3); the interaction promotes CRTAM and SCRIB polarization in a subset of CD4+ T-cells. In terms of tissue distribution, in the immune system, expression is restricted to activated class-I MHC-restricted cells, including NKT, NK and CD8+ T-cells (at protein level). Transiently expressed in activated CD8+ T-cells and a subset of activated CD4+ T-cells (at protein level). Expressed in activated intestinal T-cells, specifically intraepithelial CD4+ CD8+ T-cells, intraepithelial CD4+ T-cells and, CD8+ T-cells in the intestine epithelium, lamina propria, Peyer's Patches and mesenteric lymph nodes. Also expressed in spleen, brain and testis.

It localises to the cell membrane. Functionally, mediates heterophilic cell-cell adhesion which regulates the activation, differentiation and tissue retention of various T-cell subsets. Interaction with CADM1 promotes natural killer (NK) cell cytotoxicity and IFNG/interferon-gamma secretion by CD8+ T-cells in vitro as well as NK cell-mediated rejection of tumors expressing CADM1 in vivo. Regulates CD8+ T-cell proliferation in response to T-cell receptor (TCR) activation. Appears to be dispensable for CD8+ T-cell-mediated cytotoxicity. Interaction with SCRIB promotes the late phase of cellular polarization of a subset of CD4+ T-cells, which in turn regulates TCR-mediated proliferation and IFNG, IL17 and IL22 production. By interacting with CADM1 on CD8+ dendritic cells, regulates the retention of activated CD8+ T-cells within the draining lymph node. Required for the intestinal retention of intraepithelial CD4+ CD8+ T-cells and, to a lesser extent, intraepithelial and lamina propria CD8+ T-cells and CD4+ T-cells. Interaction with CADM1 promotes the adhesion to gut-associated CD103+ dendritic cells, which may facilitate the expression of gut-homing and adhesion molecules on T-cells and the conversion of CD4+ T-cells into CD4+ CD8+ T-cells. The sequence is that of Cytotoxic and regulatory T-cell molecule from Mus musculus (Mouse).